The chain runs to 244 residues: tRNA (guanine-N(1)-)-methyltransferase (244 aa).

S-adenosyl-L-methionine contacts are provided by residues Gly-113 and 133–138; that span reads IGDFVL.

It belongs to the RNA methyltransferase TrmD family. As to quaternary structure, homodimer.

Its subcellular location is the cytoplasm. The catalysed reaction is guanosine(37) in tRNA + S-adenosyl-L-methionine = N(1)-methylguanosine(37) in tRNA + S-adenosyl-L-homocysteine + H(+). Functionally, specifically methylates guanosine-37 in various tRNAs. The sequence is that of tRNA (guanine-N(1)-)-methyltransferase from Bacillus pumilus (strain SAFR-032).